Here is a 65-residue protein sequence, read N- to C-terminus: Large ribosomal subunit protein bL35 (65 aa).

Belongs to the bacterial ribosomal protein bL35 family.

The protein is Large ribosomal subunit protein bL35 of Geobacter sp. (strain M21).